The following is a 753-amino-acid chain: 5-methyltetrahydropteroyltriglutamate--homocysteine methyltransferase (753 aa).

5-methyltetrahydropteroyltri-L-glutamate-binding positions include 17 to 20 and K117; that span reads RELK. Residues 431-433 and E484 contribute to the L-homocysteine site; that span reads IGS. Residues 431 to 433 and E484 each bind L-methionine; that span reads IGS. 5-methyltetrahydropteroyltri-L-glutamate contacts are provided by residues 515-516 and W561; that span reads RC. Residue D599 participates in L-homocysteine binding. An L-methionine-binding site is contributed by D599. E605 provides a ligand contact to 5-methyltetrahydropteroyltri-L-glutamate. Zn(2+)-binding residues include H641, C643, and E665. H694 (proton donor) is an active-site residue. C726 is a binding site for Zn(2+).

Belongs to the vitamin-B12 independent methionine synthase family. Zn(2+) serves as cofactor.

It carries out the reaction 5-methyltetrahydropteroyltri-L-glutamate + L-homocysteine = tetrahydropteroyltri-L-glutamate + L-methionine. Its pathway is amino-acid biosynthesis; L-methionine biosynthesis via de novo pathway; L-methionine from L-homocysteine (MetE route): step 1/1. Functionally, catalyzes the transfer of a methyl group from 5-methyltetrahydrofolate to homocysteine resulting in methionine formation. This chain is 5-methyltetrahydropteroyltriglutamate--homocysteine methyltransferase, found in Escherichia coli O1:K1 / APEC.